The chain runs to 35 residues: GFGTILKALAKIAGKVVKKLATKPGATYMLKQNLQ.

Q35 is modified (glutamine amide).

Expressed by the venom gland.

It localises to the secreted. In Cupiennius salei (American wandering spider), this protein is Cupiennin-2d.